The sequence spans 412 residues: Transcription factor IIIA (412 aa).

Residues 20-43 (YLCQYCGISRSKNYLITKHIQSHH) form a C2H2-type 1; degenerate zinc finger. C2H2-type zinc fingers lie at residues 66–88 (HTCQ…MQSH), 94–118 (FTCY…LLTH), and 123–148 (FKCP…KKYH). Positions 144-207 (VKKYHSNDNR…NGNGDSQPAE (64 aa)) are disordered. Over residues 148–188 (HSNDNRDKDNTGLGDGDKDNTCKGDDDKEKSGSGGCEKENE) the composition is skewed to basic and acidic residues. Residue Lys185 forms a Glycyl lysine isopeptide (Lys-Gly) (interchain with G-Cter in ubiquitin) linkage. The C2H2-type 5 zinc finger occupies 215–239 (VVCKEIGCGKAFKYPSQLQKHQDSH). Residues 247 to 272 (AFCSEPGCMKYFTNEECLKSHIRSCH) form a C2H2-type 6; degenerate zinc finger. The C2H2-type 7; degenerate zinc-finger motif lies at 275-296 (INCEICGSKHLKKNIKRHLRTH). The segment at 305 to 330 (IKCEVEGCSSTFSKASNLQKHMKAVH) adopts a C2H2-type 8 zinc-finger fold. The C2H2-type 9; degenerate zinc-finger motif lies at 336-362 (FVCGFPGCGMRFAYKHVRNKHENSGYH). The Nuclear localization signal signature appears at 384–391 (LKRKQVTA).

Protein product TFIIIA (44 kDa) is proteolytically cleaved into TFIIIA-C (34 kDa). In terms of tissue distribution, expressed in seedlings, flowers, siliques and seeds.

It localises to the nucleus. The protein resides in the nucleolus. Essential protein. Isoform 1 is a transcription activator the binds both 5S rDNA and 5S rRNA and stimulates the transcription of 5S rRNA gene. Isoform 1 regulates 5S rRNA levels during development. The protein is Transcription factor IIIA of Arabidopsis thaliana (Mouse-ear cress).